A 219-amino-acid chain; its full sequence is Orotidine 5'-phosphate decarboxylase (219 aa).

Residues aspartate 10, lysine 32, 58-67 (DFKVADIPYT), serine 113, 163-173 (PGIGAQGGDPY), glycine 186, and arginine 187 each bind substrate. Lysine 60 serves as the catalytic Proton donor.

This sequence belongs to the OMP decarboxylase family. Type 1 subfamily. In terms of assembly, homodimer.

The catalysed reaction is orotidine 5'-phosphate + H(+) = UMP + CO2. Its pathway is pyrimidine metabolism; UMP biosynthesis via de novo pathway; UMP from orotate: step 2/2. In terms of biological role, catalyzes the decarboxylation of orotidine 5'-monophosphate (OMP) to uridine 5'-monophosphate (UMP). This is Orotidine 5'-phosphate decarboxylase from Thermoplasma volcanium (strain ATCC 51530 / DSM 4299 / JCM 9571 / NBRC 15438 / GSS1).